The following is a 246-amino-acid chain: NAD-dependent protein deacetylase (246 aa).

The 246-residue stretch at 1–246 (MKKPDIQQLK…VIEEIVNSNS (246 aa)) folds into the Deacetylase sirtuin-type domain. Residues A25, F36, R37, Q106, I108, D109, and H124 each coordinate NAD(+). F36 provides a ligand contact to nicotinamide. I108 and D109 together coordinate nicotinamide. The active-site Proton acceptor is the H124. C132, C135, C152, and C155 together coordinate Zn(2+). NAD(+)-binding residues include S193, S194, N216, and D233.

Belongs to the sirtuin family. Class U subfamily. Zn(2+) serves as cofactor.

It localises to the cytoplasm. It carries out the reaction N(6)-acetyl-L-lysyl-[protein] + NAD(+) + H2O = 2''-O-acetyl-ADP-D-ribose + nicotinamide + L-lysyl-[protein]. In terms of biological role, NAD-dependent protein deacetylase which modulates the activities of several enzymes which are inactive in their acetylated form. This chain is NAD-dependent protein deacetylase, found in Staphylococcus epidermidis (strain ATCC 35984 / DSM 28319 / BCRC 17069 / CCUG 31568 / BM 3577 / RP62A).